Consider the following 326-residue polypeptide: NAD kinase (326 aa).

Residue aspartate 93 is the Proton acceptor of the active site. NAD(+) contacts are provided by residues 93 to 94 (DG), arginine 98, 171 to 172 (NE), arginine 182, aspartate 201, and 212 to 217 (TAHAFS).

Belongs to the NAD kinase family. A divalent metal cation is required as a cofactor.

It is found in the cytoplasm. It carries out the reaction NAD(+) + ATP = ADP + NADP(+) + H(+). Involved in the regulation of the intracellular balance of NAD and NADP, and is a key enzyme in the biosynthesis of NADP. Catalyzes specifically the phosphorylation on 2'-hydroxyl of the adenosine moiety of NAD to yield NADP. The chain is NAD kinase from Thermobifida fusca (strain YX).